The primary structure comprises 1016 residues: Kinesin-like protein KIN-14K (1016 aa).

One can recognise a Calponin-homology (CH) domain in the interval 14 to 121; it reads ADRRAEVIEW…CLLVLRESVS (108 aa). Residues 123–176 are disordered; it reads GLRDGTSKAPLRKKWRVPETGEPLVPGVAQGKTSPGEDKRNGLPDPKSQQKTPI. Residues 288 to 354 are a coiled coil; the sequence is VNGTNEENQM…EVMTSMHEQQ (67 aa). Residues 481–808 enclose the Kinesin motor domain; that stretch reads NIRVYCRVRP…LKFAERVSGV (328 aa). ATP is bound at residue 565-572; it reads GQTGSGKT. Residues 820-852 are a coiled coil; sequence KDIKELLEQVASLKDTIVRKDTEIEQLQLMKDK. Polar residues-rich tracts occupy residues 884–893 and 990–1004; these read NQQSQLSDPQ and KTPN…QLIG. Disordered regions lie at residues 884–912 and 971–1016; these read NQQS…DITP and LTKN…RWQK.

This sequence belongs to the TRAFAC class myosin-kinesin ATPase superfamily. Kinesin family. KIN-14 subfamily.

The sequence is that of Kinesin-like protein KIN-14K from Oryza sativa subsp. japonica (Rice).